The following is a 344-amino-acid chain: MIRKDLSQIPTYVPGKRNDHALKLSSNEVTHRPLPSAAQAMAEAAAGANRYPDMGVTELRGALSEHLGVPAEQIAVGCGSSALCQQLVQITCTPGDEVVFPWRSFEAYPIFVQVVGATPVAVPLTSDGFNDLDAMAAAITPKTKLVFVCNPNNPSGTVVRREAFLEFMAKVPADVVVALDEAYTEYVRDEDTIFATEILSEFPNLVGLRTFSKAFGLAGVRVGYAFGPHELIDALNKVALPFGVNAVGQAGALASLNNLDELMEHTEEVVAVRDRVADHIGAAHSQANFVWIPAESRSETPFEIAEKLAAHDVLVRAFPEGVRITVTNEEESDRLLAAWDASFA.

Lysine 213 carries the N6-(pyridoxal phosphate)lysine modification.

It belongs to the class-II pyridoxal-phosphate-dependent aminotransferase family. As to quaternary structure, homodimer. Requires pyridoxal 5'-phosphate as cofactor.

The enzyme catalyses an aromatic L-alpha-amino acid + 2-oxoglutarate = an aromatic oxo-acid + L-glutamate. In terms of biological role, aminotransferase that catalyzes the conversion of aromatic amino acids and 2-oxoglutarate into corresponding aromatic oxo acids and L-glutamate. The polypeptide is Aromatic amino acid aminotransferase (Corynebacterium diphtheriae (strain ATCC 700971 / NCTC 13129 / Biotype gravis)).